Here is a 510-residue protein sequence, read N- to C-terminus: Zinc finger and SCAN domain-containing protein 18 (510 aa).

The segment at 1-40 is disordered; that stretch reads MLPLEKAFASPRSSPAPPDLPTPGSAAGVQQEEPETIPER. Residues 49 to 131 form the SCAN box domain; it reads RLRFREFVYQ…SLVEGLADVL (83 aa). Disordered regions lie at residues 172 to 191, 201 to 231, 263 to 413, and 461 to 510; these read ALGAGEIPAPSETPWLSPDP, EAKTEEDGPANTEQKLKSFPEDPQHLGEWGH, TEEL…GKPY, and KTHE…EAQR. 2 stretches are compositionally biased toward basic and acidic residues: residues 214–231 and 263–273; these read QKLKSFPEDPQHLGEWGH and TEELRLVERDP. Low complexity predominate over residues 288 to 299; sequence AGCACEEAAPAG. Over residues 344 to 356 the composition is skewed to polar residues; the sequence is DSATGSQRQSVIQ. 2 C2H2-type zinc fingers span residues 413 to 435 and 441 to 463; these read YACGECGEAFAWLSHLMEHHSSH and YACQGCWKTFHFSLALAEHQKTH. The segment covering 491–501 has biased composition (low complexity); it reads GGPPESVEGEA.

It belongs to the krueppel C2H2-type zinc-finger protein family.

The protein resides in the nucleus. In terms of biological role, may be involved in transcriptional regulation. The chain is Zinc finger and SCAN domain-containing protein 18 (ZSCAN18) from Homo sapiens (Human).